The sequence spans 254 residues: Hydroxyacylglutathione hydrolase (254 aa).

Histidine 54, histidine 56, aspartate 58, histidine 59, histidine 111, aspartate 130, and histidine 168 together coordinate Zn(2+).

It belongs to the metallo-beta-lactamase superfamily. Glyoxalase II family. Monomer. The cofactor is Zn(2+).

It catalyses the reaction an S-(2-hydroxyacyl)glutathione + H2O = a 2-hydroxy carboxylate + glutathione + H(+). It participates in secondary metabolite metabolism; methylglyoxal degradation; (R)-lactate from methylglyoxal: step 2/2. Functionally, thiolesterase that catalyzes the hydrolysis of S-D-lactoyl-glutathione to form glutathione and D-lactic acid. In Legionella pneumophila (strain Corby), this protein is Hydroxyacylglutathione hydrolase.